Consider the following 410-residue polypeptide: Putative competence-damage inducible protein (410 aa).

Belongs to the CinA family.

This chain is Putative competence-damage inducible protein, found in Finegoldia magna (strain ATCC 29328 / DSM 20472 / WAL 2508) (Peptostreptococcus magnus).